Reading from the N-terminus, the 157-residue chain is UPF0127 protein TK1120 (157 aa).

The protein belongs to the UPF0127 family.

This is UPF0127 protein TK1120 from Thermococcus kodakarensis (strain ATCC BAA-918 / JCM 12380 / KOD1) (Pyrococcus kodakaraensis (strain KOD1)).